Reading from the N-terminus, the 400-residue chain is 3-hydroxykynurenine transaminase (400 aa).

Positions 43–44 (SN) are binds to and confers specificity for 3-hydroxykynurenine; shared with dimeric partner. Pyridoxal 5'-phosphate contacts are provided by residues 77-79 (SAH), S154, and Q204. Substrate is bound at residue S154. Residue K205 is modified to N6-(pyridoxal phosphate)lysine. Positions 256 and 259 each coordinate pyridoxal 5'-phosphate. R356 serves as a coordination point for substrate.

This sequence belongs to the class-V pyridoxal-phosphate-dependent aminotransferase family. In terms of assembly, homodimer. May form homotetramer. It depends on pyridoxal 5'-phosphate as a cofactor.

The protein resides in the peroxisome. It catalyses the reaction glyoxylate + L-alanine = glycine + pyruvate. The catalysed reaction is L-kynurenine + glyoxylate = kynurenate + glycine + H2O. The enzyme catalyses 3-hydroxy-L-kynurenine + glyoxylate = xanthurenate + glycine + H2O. It carries out the reaction 3-hydroxy-L-kynurenine + pyruvate = xanthurenate + L-alanine + H2O. It catalyses the reaction L-kynurenine + pyruvate = kynurenate + L-alanine + H2O. The catalysed reaction is 2-oxobutanoate + L-alanine = (2S)-2-aminobutanoate + pyruvate. The enzyme catalyses L-phenylalanine + pyruvate = 3-phenylpyruvate + L-alanine. It carries out the reaction L-serine + pyruvate = 3-hydroxypyruvate + L-alanine. It catalyses the reaction L-cysteine + pyruvate = 2-oxo-3-sulfanylpropanoate + L-alanine. The catalysed reaction is 3-hydroxy-L-kynurenine + oxaloacetate = 4-(2-amino-3-hydroxyphenyl)-2,4-dioxobutanoate + L-aspartate. The enzyme catalyses 3-hydroxy-L-kynurenine + 3-phenylpyruvate = 4-(2-amino-3-hydroxyphenyl)-2,4-dioxobutanoate + L-phenylalanine. It carries out the reaction L-kynurenine + oxaloacetate = 4-(2-aminophenyl)-2,4-dioxobutanoate + L-aspartate. It catalyses the reaction 3-phenylpyruvate + L-kynurenine = 4-(2-aminophenyl)-2,4-dioxobutanoate + L-phenylalanine. It functions in the pathway amino-acid degradation; L-kynurenine degradation; kynurenate from L-kynurenine: step 1/2. Functionally, catalyzes the pyridoxal 5'-phosphate-dependent transamination of both 3-hydroxykynurenine and L-kynurenine to xanthurenic acid and kynurenic acid, respectively, preferentially using the alpha-ketoacid pyruvate, glyoxylate or oxaloacetate as the amino group acceptor. The affinity and catalytic efficiency for 3-hydroxykynurenine is higher than for L-kynurenine. Involved in the detoxification of cytotoxic metabolite 3-hydroxykynurenine generated by the hydroxylation of L-kynurenine, an intermediate in the tryptophan catabolism pathway. Also catalyzes, although with a lesser efficiency, the transamination of alanine with glyoxylate as an amino group acceptor. May play a role in the detoxification of glyoxylate, a toxic plant metabolite from the diet. The protein is 3-hydroxykynurenine transaminase of Aedes aegypti (Yellowfever mosquito).